Reading from the N-terminus, the 270-residue chain is MVAYENVLANKASSGRLCKALGIRLVTNPLVVQLAKNAGFDALFIDLEHSTLSLADASAIACAGLLSGLTPFVRVPYQCGMGFVQQVLDGGAMGIIFPHVHTAADARAAVDTCKFPPHGRRSMWGQQPVLGLRVTPLHKIAEVCDRVASSVVVMIEAADSIEQADAIAAVEGVDVLLVGCIDLSTDMGIAGNFESKRFRAALEAVSAACHRHGKLMGLAGLYNNRKLQEWAVHSLRARFILCQQDSNLLALGAMECAGAVASIQLDRCPD.

The active-site Proton acceptor is the histidine 49. The a divalent metal cation site is built by glutamate 156 and aspartate 182. Substrate is bound at residue aspartate 182.

This sequence belongs to the HpcH/HpaI aldolase family. In terms of assembly, homohexamer; trimer of dimers. Co(2+) serves as cofactor. It depends on Mn(2+) as a cofactor. Zn(2+) is required as a cofactor. The cofactor is Fe(2+). Requires Mg(2+) as cofactor.

The enzyme catalyses 4-hydroxy-4-methyl-2-oxoglutarate = 2 pyruvate. Its pathway is secondary metabolite biosynthesis. Functionally, 4-hydroxy-4-methyl-2-oxoglutarate aldolase; part of the gene cluster that mediates the biosynthesis of the tetramic acids Sch210971 and Sch210972, potential anti-HIV fungal natural product that contain a decalin core. The PKS module of tasS together with the enoylreductase tasC catalyze the formation of the polyketide unit which is then conjugated to 4-hydroxyl-4-methyl glutamate (HMG) by the condensation domain of the tasS NRPS module. One unique structural feature of Sch210971 and Sch210972 is the tetramic acid motif proposed to be derived from the non-proteinogenic amino acid HMG, by a Dieckmann-type condensation catalyzed by the reductase domain of tasS. The aldolase tasA catalyzes the aldol condensation of 2 molecules of pyruvic acid to yield the intermediate 4-hydroxyl-4-methyl-2-oxoglutarate (HMOG), which can then be stereoselectively transaminated, may be by tasG, to form HMG. The Diels-Alderase tas3 then uses the Dieckmann product of tasS as substrate and catalyzes the Diels-Alder cycloaddition to form the decalin ring of Sch210971 and Sch210972. This chain is 4-hydroxy-4-methyl-2-oxoglutarate aldolase tasA, found in Hapsidospora irregularis.